Here is a 225-residue protein sequence, read N- to C-terminus: Biosynthetic peptidoglycan transglycosylase (225 aa).

A helical transmembrane segment spans residues 12-32 (IWFVAWRFLLLFVIVLFLFRF).

The protein belongs to the glycosyltransferase 51 family.

Its subcellular location is the cell inner membrane. It catalyses the reaction [GlcNAc-(1-&gt;4)-Mur2Ac(oyl-L-Ala-gamma-D-Glu-L-Lys-D-Ala-D-Ala)](n)-di-trans,octa-cis-undecaprenyl diphosphate + beta-D-GlcNAc-(1-&gt;4)-Mur2Ac(oyl-L-Ala-gamma-D-Glu-L-Lys-D-Ala-D-Ala)-di-trans,octa-cis-undecaprenyl diphosphate = [GlcNAc-(1-&gt;4)-Mur2Ac(oyl-L-Ala-gamma-D-Glu-L-Lys-D-Ala-D-Ala)](n+1)-di-trans,octa-cis-undecaprenyl diphosphate + di-trans,octa-cis-undecaprenyl diphosphate + H(+). The protein operates within cell wall biogenesis; peptidoglycan biosynthesis. Functionally, peptidoglycan polymerase that catalyzes glycan chain elongation from lipid-linked precursors. The protein is Biosynthetic peptidoglycan transglycosylase of Marinomonas sp. (strain MWYL1).